The following is a 91-amino-acid chain: MGRSLKKGPFVADSLLRKVEKLNAAGEKPVIKTWSRASTILPMMIGHTIAVHNGKAHVPVFVTEQMVGHKLGEFAPTRTFKGHIKDKKGGR.

It belongs to the universal ribosomal protein uS19 family.

Functionally, protein S19 forms a complex with S13 that binds strongly to the 16S ribosomal RNA. In Synechococcus sp. (strain RCC307), this protein is Small ribosomal subunit protein uS19.